Reading from the N-terminus, the 143-residue chain is AP-2 complex subunit sigma (143 aa).

The protein belongs to the adaptor complexes small subunit family. Adaptor protein complex 2 (AP-2) is a heterotetramer composed of two large adaptins (alpha-type subunit APL3 and beta-type subunit APL1), a medium chain (mu-type subunit APM4) and a small adaptin (sigma-type subunit APS2).

It is found in the cell membrane. The protein resides in the membrane. It localises to the coated pit. In terms of biological role, component of the adaptor complexes which link clathrin to receptors in coated vesicles. Clathrin-associated protein complexes are believed to interact with the cytoplasmic tails of membrane proteins, leading to their selection and concentration. The sequence is that of AP-2 complex subunit sigma (aps-2) from Neurospora crassa (strain ATCC 24698 / 74-OR23-1A / CBS 708.71 / DSM 1257 / FGSC 987).